Consider the following 499-residue polypeptide: uncharacterized protein (499 aa).

A run of 12 helical transmembrane segments spans residues 51–71 (LLFR…LVAF), 98–118 (IIAS…TLLM), 127–147 (LAFI…CHNF), 155–175 (LVLG…LTMI), 187–207 (YLFA…YAVL), 220–240 (WLFI…YFII), 301–321 (CLYG…YTSL), 325–345 (YMTI…SFLS), 352–372 (GIIL…LLAC), 378–398 (VLYF…GLNV), 412–432 (ATAI…AGQI), and 444–464 (LTSL…IFFL).

This sequence belongs to the major facilitator superfamily. Allantoate permease family.

The protein localises to the golgi apparatus. It is found in the membrane. This is an uncharacterized protein from Schizosaccharomyces pombe (strain 972 / ATCC 24843) (Fission yeast).